Consider the following 436-residue polypeptide: Methylenetetrahydrofolate--tRNA-(uracil-5-)-methyltransferase TrmFO (436 aa).

Residue 9 to 14 (GAGLAG) coordinates FAD.

This sequence belongs to the MnmG family. TrmFO subfamily. Requires FAD as cofactor.

The protein localises to the cytoplasm. The enzyme catalyses uridine(54) in tRNA + (6R)-5,10-methylene-5,6,7,8-tetrahydrofolate + NADH + H(+) = 5-methyluridine(54) in tRNA + (6S)-5,6,7,8-tetrahydrofolate + NAD(+). The catalysed reaction is uridine(54) in tRNA + (6R)-5,10-methylene-5,6,7,8-tetrahydrofolate + NADPH + H(+) = 5-methyluridine(54) in tRNA + (6S)-5,6,7,8-tetrahydrofolate + NADP(+). Functionally, catalyzes the folate-dependent formation of 5-methyl-uridine at position 54 (M-5-U54) in all tRNAs. The sequence is that of Methylenetetrahydrofolate--tRNA-(uracil-5-)-methyltransferase TrmFO from Acetivibrio thermocellus (strain ATCC 27405 / DSM 1237 / JCM 9322 / NBRC 103400 / NCIMB 10682 / NRRL B-4536 / VPI 7372) (Clostridium thermocellum).